The sequence spans 561 residues: DNA ligase B (561 aa).

Catalysis depends on Lys125, which acts as the N6-AMP-lysine intermediate.

The protein belongs to the NAD-dependent DNA ligase family. LigB subfamily.

It catalyses the reaction NAD(+) + (deoxyribonucleotide)n-3'-hydroxyl + 5'-phospho-(deoxyribonucleotide)m = (deoxyribonucleotide)n+m + AMP + beta-nicotinamide D-nucleotide.. Its function is as follows. Catalyzes the formation of phosphodiester linkages between 5'-phosphoryl and 3'-hydroxyl groups in double-stranded DNA using NAD as a coenzyme and as the energy source for the reaction. The chain is DNA ligase B from Salmonella arizonae (strain ATCC BAA-731 / CDC346-86 / RSK2980).